The following is a 109-amino-acid chain: B melanoma antigen 2 (109 aa).

An N-terminal signal peptide occupies residues 1 to 17 (MAAGVVFLALSAQLLQA).

The protein belongs to the BAGE family. Not expressed in normal tissues except in testis. Expressed in 22% of melanomas, in bladder and lung carcinomas.

Its subcellular location is the secreted. Functionally, unknown. Candidate gene encoding tumor antigens. The sequence is that of B melanoma antigen 2 (BAGE2) from Homo sapiens (Human).